Here is a 558-residue protein sequence, read N- to C-terminus: DEAD-box ATP-dependent RNA helicase 49 (558 aa).

The Q motif motif lies at 16–44 (FSELKPPLSEDIIEALDRSGFEVCTPVQA). The Helicase ATP-binding domain maps to 47–226 (IPFLCSHKDV…KAGLRNAMEV (180 aa)). 60–67 (AATGSGKT) provides a ligand contact to ATP. Residues 174–177 (DEAD) carry the DEAD box motif. One can recognise a Helicase C-terminal domain in the interval 255 to 402 (QLVHLLIENK…ERKCSENASD (148 aa)). A disordered region spans residues 506 to 558 (KDKLQQEKRGKRKKSSKEAVDDSNKASRKRKLTGRQRQTIQTAQDEEEMNLRL). The segment covering 521 to 530 (SKEAVDDSNK) has biased composition (basic and acidic residues). A compositionally biased stretch (acidic residues) spans 549–558 (QDEEEMNLRL).

This sequence belongs to the DEAD box helicase family. DDX55/SPB4 subfamily.

The catalysed reaction is ATP + H2O = ADP + phosphate + H(+). The chain is DEAD-box ATP-dependent RNA helicase 49 (RH49) from Arabidopsis thaliana (Mouse-ear cress).